A 1865-amino-acid polypeptide reads, in one-letter code: Endoribonuclease Dicer (1865 aa).

The Helicase ATP-binding domain maps to 41-213; that stretch reads LLEAALEHNT…DLEEKIQNLE (173 aa). ATP is bound at residue 54–61; sequence LNTGSGKT. Residues 161-164 carry the DECH box motif; it reads DECH. The disordered stretch occupies residues 397–417; sequence SWSDSEDDDEDEEAEAKEKTE. Residues 400–411 are compositionally biased toward acidic residues; it reads DSEDDDEDEEAE. Positions 419–588 constitute a Helicase C-terminal domain; it reads NFPSPFTNIL…SAECNDFELE (170 aa). One can recognise a Dicer dsRNA-binding fold domain in the interval 616–708; it reads AIGHVNRYCA…MPVGKETVKY (93 aa). The segment at 713–732 is disordered; it reads DLHDEEETSVPGRPGSTKRR. A PAZ domain is found at 881–1028; that stretch reads KFMEDIEKSE…LVPELCAIHP (148 aa). 2 stretches are compositionally biased toward polar residues: residues 1111–1128 and 1192–1201; these read GTSS…SMEV and STQTTTSVSV. Disordered stretches follow at residues 1111-1142 and 1190-1259; these read GTSS…PDEK and DLST…DCRS. The segment covering 1240–1252 has biased composition (low complexity); sequence SETATSTPAPSET. The region spanning 1262-1385 is the RNase III 1 domain; the sequence is AGPAWDSPKT…TDKWDSDENK (124 aa). Mg(2+)-binding residues include E1298, D1377, and D1380. The segment at 1373 to 1417 is disordered; sequence KSSTDKWDSDENKDLANGKASDDEDEDDDDEPEEAEVEPSKEDVN. The span at 1374-1388 shows a compositional bias: basic and acidic residues; sequence SSTDKWDSDENKDLA. Acidic residues predominate over residues 1394–1409; sequence DDEDEDDDDEPEEAEV. Residues 1609–1767 enclose the RNase III 2 domain; the sequence is FLNFESKINY…LAGAIYMDSG (159 aa). Positions 1648, 1753, and 1756 each coordinate Mg(2+). Residues 1792 to 1857 form the DRBM domain; that stretch reads VPRSPVRELL…ARRALRSLKA (66 aa).

This sequence belongs to the helicase family. Dicer subfamily. As to quaternary structure, component of the RISC loading complex (RLC), or micro-RNA (miRNA) loading complex (miRLC), which is composed of dicer1, ago2 and tarbp2; dicer1 and tarbp2 are required to process precursor miRNAs (pre-miRNAs) to mature miRNAs and then load them onto ago2. Note that the trimeric RLC/miRLC is also referred to as RISC. It depends on Mg(2+) as a cofactor. Requires Mn(2+) as cofactor.

It localises to the cytoplasm. The enzyme catalyses Endonucleolytic cleavage to 5'-phosphomonoester.. Its function is as follows. Double-stranded RNA (dsRNA) endoribonuclease playing a central role in short dsRNA-mediated post-transcriptional gene silencing. Cleaves naturally occurring long dsRNAs and short hairpin pre-microRNAs (miRNA) into fragments of twenty-one to twenty-three nucleotides with 3' overhang of two nucleotides, producing respectively short interfering RNAs (siRNA) and mature microRNAs. SiRNAs and miRNAs serve as guide to direct the RNA-induced silencing complex (RISC) to complementary RNAs to degrade them or prevent their translation. Gene silencing mediated by siRNAs, also called RNA interference, controls the elimination of transcripts from mobile and repetitive DNA elements of the genome but also the degradation of exogenous RNA of viral origin for instance. The miRNA pathway on the other side is a mean to specifically regulate the expression of target genes. This chain is Endoribonuclease Dicer (dicer1), found in Danio rerio (Zebrafish).